Consider the following 88-residue polypeptide: Small ribosomal subunit protein uS15 (88 aa).

Belongs to the universal ribosomal protein uS15 family. As to quaternary structure, part of the 30S ribosomal subunit. Forms a bridge to the 50S subunit in the 70S ribosome, contacting the 23S rRNA.

Its function is as follows. One of the primary rRNA binding proteins, it binds directly to 16S rRNA where it helps nucleate assembly of the platform of the 30S subunit by binding and bridging several RNA helices of the 16S rRNA. Forms an intersubunit bridge (bridge B4) with the 23S rRNA of the 50S subunit in the ribosome. The polypeptide is Small ribosomal subunit protein uS15 (Francisella tularensis subsp. novicida (strain U112)).